The chain runs to 366 residues: Chorismate synthase (366 aa).

NADP(+) contacts are provided by Arg-48 and Arg-54. Residues 125 to 127 (RSS), 238 to 239 (NA), Gly-278, 293 to 297 (KPTSS), and Arg-319 contribute to the FMN site.

The protein belongs to the chorismate synthase family. Homotetramer. The cofactor is FMNH2.

The catalysed reaction is 5-O-(1-carboxyvinyl)-3-phosphoshikimate = chorismate + phosphate. Its pathway is metabolic intermediate biosynthesis; chorismate biosynthesis; chorismate from D-erythrose 4-phosphate and phosphoenolpyruvate: step 7/7. Functionally, catalyzes the anti-1,4-elimination of the C-3 phosphate and the C-6 proR hydrogen from 5-enolpyruvylshikimate-3-phosphate (EPSP) to yield chorismate, which is the branch point compound that serves as the starting substrate for the three terminal pathways of aromatic amino acid biosynthesis. This reaction introduces a second double bond into the aromatic ring system. This chain is Chorismate synthase, found in Neisseria gonorrhoeae (strain NCCP11945).